Here is a 220-residue protein sequence, read N- to C-terminus: MGQKINPTGFRVGVIRDWDAKWYADKDFAAFLHEDIEIRNFINKKLQDASVSRIEIERAAKRVNISIHTAKPGMVIGKGGSEVENLRKQLNKLTGRQVHINIVEIKKPDLDAKLVGENIARQLEQRIAFRRAMRQAMQRTMRAGAKGIKTQASGRLNGADIARREHYNEGLVPLHTLRADIDYAWEEAATTYGRIGIKTWINRGEILPEKPKQNSVKGGK.

One can recognise a KH type-2 domain in the interval 38–106; the sequence is IRNFINKKLQ…QVHINIVEIK (69 aa).

It belongs to the universal ribosomal protein uS3 family. As to quaternary structure, part of the 30S ribosomal subunit. Forms a tight complex with proteins S10 and S14.

Its function is as follows. Binds the lower part of the 30S subunit head. Binds mRNA in the 70S ribosome, positioning it for translation. This chain is Small ribosomal subunit protein uS3, found in Lacticaseibacillus paracasei (strain ATCC 334 / BCRC 17002 / CCUG 31169 / CIP 107868 / KCTC 3260 / NRRL B-441) (Lactobacillus paracasei).